Consider the following 80-residue polypeptide: Cell division protein ZapB (80 aa).

Residues 3 to 80 (LEILEQLEAK…GLLGKMEEVE (78 aa)) adopt a coiled-coil conformation. Positions 41 to 62 (LEQANNGRSEVEQEAQKARDEQ) are disordered. A compositionally biased stretch (basic and acidic residues) spans 49-62 (SEVEQEAQKARDEQ).

It belongs to the ZapB family. Homodimer. The ends of the coiled-coil dimer bind to each other, forming polymers. Interacts with FtsZ.

It localises to the cytoplasm. Functionally, non-essential, abundant cell division factor that is required for proper Z-ring formation. It is recruited early to the divisome by direct interaction with FtsZ, stimulating Z-ring assembly and thereby promoting cell division earlier in the cell cycle. Its recruitment to the Z-ring requires functional FtsA or ZipA. The chain is Cell division protein ZapB from Aliivibrio salmonicida (strain LFI1238) (Vibrio salmonicida (strain LFI1238)).